A 120-amino-acid chain; its full sequence is Large ribosomal subunit protein bL12 (120 aa).

This sequence belongs to the bacterial ribosomal protein bL12 family. As to quaternary structure, homodimer. Part of the ribosomal stalk of the 50S ribosomal subunit. Forms a multimeric L10(L12)X complex, where L10 forms an elongated spine to which 2 to 4 L12 dimers bind in a sequential fashion. Binds GTP-bound translation factors.

Its function is as follows. Forms part of the ribosomal stalk which helps the ribosome interact with GTP-bound translation factors. Is thus essential for accurate translation. The chain is Large ribosomal subunit protein bL12 from Lactobacillus gasseri (strain ATCC 33323 / DSM 20243 / BCRC 14619 / CIP 102991 / JCM 1131 / KCTC 3163 / NCIMB 11718 / NCTC 13722 / AM63).